The chain runs to 156 residues: Transcription elongation factor GreA (156 aa).

Residues 2–27 are a coiled coil; it reads EKTFPMTKEGLDKLKAELENLKLVKR.

It belongs to the GreA/GreB family.

Necessary for efficient RNA polymerase transcription elongation past template-encoded arresting sites. The arresting sites in DNA have the property of trapping a certain fraction of elongating RNA polymerases that pass through, resulting in locked ternary complexes. Cleavage of the nascent transcript by cleavage factors such as GreA or GreB allows the resumption of elongation from the new 3'terminus. GreA releases sequences of 2 to 3 nucleotides. This Lactococcus lactis subsp. cremoris (strain MG1363) protein is Transcription elongation factor GreA.